The sequence spans 493 residues: Glutamate--tRNA ligase (493 aa).

Positions 10–20 (PSPTGDPHVGT) match the 'HIGH' region motif. A 'KMSKS' region motif is present at residues 251–255 (KLSKR). ATP is bound at residue lysine 254.

Belongs to the class-I aminoacyl-tRNA synthetase family. Glutamate--tRNA ligase type 1 subfamily. In terms of assembly, monomer.

Its subcellular location is the cytoplasm. The catalysed reaction is tRNA(Glu) + L-glutamate + ATP = L-glutamyl-tRNA(Glu) + AMP + diphosphate. Its function is as follows. Catalyzes the attachment of glutamate to tRNA(Glu) in a two-step reaction: glutamate is first activated by ATP to form Glu-AMP and then transferred to the acceptor end of tRNA(Glu). This Pseudomonas syringae pv. syringae (strain B728a) protein is Glutamate--tRNA ligase.